Reading from the N-terminus, the 466-residue chain is Communesin N16 acyltransferase cnsK (466 aa).

Belongs to the fumigaclavine B O-acetyltransferase family.

Its pathway is alkaloid biosynthesis. Communesin N16 acyltransferase; part of the gene cluster that mediates the biosynthesis of communesins, a prominent class of indole alkaloids with great potential as pharmaceuticals. Communesins are biosynthesized by the coupling of tryptamine and aurantioclavine, two building blocks derived from L-tryptophan. The L-tryptophan decarboxylase cnsB converts L-tryptophan to tryptamine, whereas the tryptophan dimethylallyltransferase cnsF converts L-tryptophan to 4-dimethylallyl tryptophan which is further transformed to aurantioclavine by the aurantioclavine synthase cnsA, probably aided by the catalase cnsD. The cytochrome P450 monooxygenase cnsC catalyzes the heterodimeric coupling between the two different indole moieties, tryptamine and aurantioclavine, to construct vicinal quaternary stereocenters and yield the heptacyclic communesin scaffold. The O-methyltransferase cnsE then methylates the communesin scaffold to produce communesin K, the simplest characterized communesin that contains the heptacyclic core. The dioxygenase cnsJ converts communesin K into communesin I. Acylation to introduce the hexadienyl group at position N16 of communesin I by the acyltransferase cnsK leads to the production of communesin B. The hexadienyl group is produced by the highly reducing polyketide synthase cnsI, before being hydrolytically removed from cnsI by the serine hydrolase cnsH, converted into hexadienyl-CoA by the CoA ligase cnsG, and then transferred to communesin I by cnsK. Surprisingly, cnsK may also be a promiscuous acyltransferase that can tolerate a range of acyl groups, including acetyl-, propionyl-, and butyryl-CoA, which lead to communesins A, G and H respectively. The roles of the alpha-ketoglutarate-dependent dioxygenases cnsM and cnsP have still to be determined. The polypeptide is Communesin N16 acyltransferase cnsK (Penicillium expansum (Blue mold rot fungus)).